The following is a 522-amino-acid chain: Gypsy retrotransposon integrase-like protein 1 (522 aa).

Residues 135–292 (KVENPWSLVT…TPYFQMFSRN (158 aa)) form the Integrase catalytic domain. S502 carries the post-translational modification Phosphoserine.

This is Gypsy retrotransposon integrase-like protein 1 (GIN1) from Pongo abelii (Sumatran orangutan).